The chain runs to 447 residues: N-succinylarginine dihydrolase (447 aa).

Residues 19–28 (AGLSFGNEAS), N110, and 137–138 (HR) contribute to the substrate site. E174 is an active-site residue. R212 is a substrate binding site. The active site involves H248. The substrate site is built by D250 and N359. C365 functions as the Nucleophile in the catalytic mechanism.

Belongs to the succinylarginine dihydrolase family. In terms of assembly, homodimer.

The enzyme catalyses N(2)-succinyl-L-arginine + 2 H2O + 2 H(+) = N(2)-succinyl-L-ornithine + 2 NH4(+) + CO2. The protein operates within amino-acid degradation; L-arginine degradation via AST pathway; L-glutamate and succinate from L-arginine: step 2/5. In terms of biological role, catalyzes the hydrolysis of N(2)-succinylarginine into N(2)-succinylornithine, ammonia and CO(2). This Escherichia coli O139:H28 (strain E24377A / ETEC) protein is N-succinylarginine dihydrolase.